The primary structure comprises 82 residues: Large ribosomal subunit protein bL27 (82 aa).

The segment at 1-21 (MAHKKGASSSRNGRDSNAKRL) is disordered.

The protein belongs to the bacterial ribosomal protein bL27 family.

This Tropheryma whipplei (strain TW08/27) (Whipple's bacillus) protein is Large ribosomal subunit protein bL27.